The chain runs to 210 residues: Thymidylate kinase (210 aa).

Residue 10-17 (GPEGAGKS) coordinates ATP.

This sequence belongs to the thymidylate kinase family.

It carries out the reaction dTMP + ATP = dTDP + ADP. In terms of biological role, phosphorylation of dTMP to form dTDP in both de novo and salvage pathways of dTTP synthesis. The protein is Thymidylate kinase of Pseudomonas syringae pv. tomato (strain ATCC BAA-871 / DC3000).